Reading from the N-terminus, the 310-residue chain is MSGERAKRFPLALEDLKRAPRKSEGRAGERHAAVAGSKAADKPAAVLKPVAVKPAAVRTALPGSAAAKPATAPKPTALKPAMPKPAAPSVAPAGAFALTSERVRERMVERLRANGVTDARVLEAMAAVPRHMFVDPGLATQAYEDSALPIGHQQTISKPSVVARMIELAMAGRTLERVLEIGTGCGYQAAVLSHVARDVYSIERIKPLYERAKLNLRPLRVPNIRLHYGDGRVGLPSAAPFDAIVIAAAGLDVPQALLEQLAIGGRLVAPVGAQSGQHQVLTLVERVAHAQWRESRLDRVFFVPLKSGVI.

2 disordered regions span residues 1-42 (MSGE…AADK) and 64-90 (SAAAKPATAPKPTALKPAMPKPAAPSV). A compositionally biased stretch (basic and acidic residues) spans 14 to 32 (EDLKRAPRKSEGRAGERHA). Low complexity predominate over residues 64-81 (SAAAKPATAPKPTALKPA). Residue Ser-157 is part of the active site.

This sequence belongs to the methyltransferase superfamily. L-isoaspartyl/D-aspartyl protein methyltransferase family.

It localises to the cytoplasm. The enzyme catalyses [protein]-L-isoaspartate + S-adenosyl-L-methionine = [protein]-L-isoaspartate alpha-methyl ester + S-adenosyl-L-homocysteine. Catalyzes the methyl esterification of L-isoaspartyl residues in peptides and proteins that result from spontaneous decomposition of normal L-aspartyl and L-asparaginyl residues. It plays a role in the repair and/or degradation of damaged proteins. The protein is Protein-L-isoaspartate O-methyltransferase of Burkholderia lata (strain ATCC 17760 / DSM 23089 / LMG 22485 / NCIMB 9086 / R18194 / 383).